The following is a 98-amino-acid chain: NADH-ubiquinone oxidoreductase chain 4L (98 aa).

Transmembrane regions (helical) follow at residues 2 to 22 (PSIS…MLMF), 29 to 49 (SLLC…LTIL), and 61 to 81 (ILLL…LVMV).

It belongs to the complex I subunit 4L family. Core subunit of respiratory chain NADH dehydrogenase (Complex I) which is composed of 45 different subunits.

Its subcellular location is the mitochondrion inner membrane. It catalyses the reaction a ubiquinone + NADH + 5 H(+)(in) = a ubiquinol + NAD(+) + 4 H(+)(out). Core subunit of the mitochondrial membrane respiratory chain NADH dehydrogenase (Complex I) which catalyzes electron transfer from NADH through the respiratory chain, using ubiquinone as an electron acceptor. Part of the enzyme membrane arm which is embedded in the lipid bilayer and involved in proton translocation. This is NADH-ubiquinone oxidoreductase chain 4L (MT-ND4L) from Microcebus mittermeieri (Mittermeier's mouse lemur).